The chain runs to 307 residues: Ribosomal RNA small subunit methyltransferase H (307 aa).

S-adenosyl-L-methionine is bound by residues 32-34, D52, F78, D100, and Q107; that span reads GGH.

This sequence belongs to the methyltransferase superfamily. RsmH family.

It is found in the cytoplasm. It catalyses the reaction cytidine(1402) in 16S rRNA + S-adenosyl-L-methionine = N(4)-methylcytidine(1402) in 16S rRNA + S-adenosyl-L-homocysteine + H(+). Its function is as follows. Specifically methylates the N4 position of cytidine in position 1402 (C1402) of 16S rRNA. The polypeptide is Ribosomal RNA small subunit methyltransferase H (Coxiella burnetii (strain CbuG_Q212) (Coxiella burnetii (strain Q212))).